A 1030-amino-acid chain; its full sequence is Putative pentatricopeptide repeat-containing protein At5g06400, mitochondrial (1030 aa).

Residues 1 to 77 (MKALFRFKSC…VKLDETTRLR (77 aa)) constitute a mitochondrion transit peptide. 19 PPR repeats span residues 188-222 (RVGI…GCDK), 223-257 (DIRT…GFEL), 258-292 (DATA…GITF), 293-323 (GLRT…MVRI), 328-362 (EHDA…EMCL), 363-393 (DAKY…MKRR), 397-431 (DSNV…GRPP), 432-466 (RVST…GIEP), 467-501 (DSVA…GIKP), 502-536 (TWKS…KIVI), 677-711 (NSEA…GCLI), 712-746 (TQDT…GLIP), 747-783 (SSST…GFVP), 784-814 (DREL…LGKI), 818-852 (VTVA…RSLL), 853-887 (DQYT…GTKP), 888-922 (GVHV…SCEP), 923-957 (SVVT…GTSP), and 958-992 (DFKT…GIAP).

The protein belongs to the PPR family. P subfamily.

The protein localises to the mitochondrion. The chain is Putative pentatricopeptide repeat-containing protein At5g06400, mitochondrial from Arabidopsis thaliana (Mouse-ear cress).